Reading from the N-terminus, the 762-residue chain is Molybdenum cofactor sulfurase 2 (762 aa).

Position 234 is an N6-(pyridoxal phosphate)lysine (Lys-234). Cys-400 is an active-site residue. In terms of domain architecture, MOSC spans 590–738; that stretch reads AWISKALRMP…LECGSILEPV (149 aa).

The protein belongs to the class-V pyridoxal-phosphate-dependent aminotransferase family. MOCOS subfamily. Requires pyridoxal 5'-phosphate as cofactor.

It carries out the reaction Mo-molybdopterin + L-cysteine + AH2 = thio-Mo-molybdopterin + L-alanine + A + H2O. Sulfurates the molybdenum cofactor. Sulfation of molybdenum is essential for xanthine dehydrogenase (XDH) and aldehyde oxidase (ADO) enzymes in which molybdenum cofactor is liganded by 1 oxygen and 1 sulfur atom in active form. This is Molybdenum cofactor sulfurase 2 from Aedes aegypti (Yellowfever mosquito).